We begin with the raw amino-acid sequence, 128 residues long: Glycine cleavage system H protein (128 aa).

Residues 24 to 106 form the Lipoyl-binding domain; sequence VYSVGITEHA…YTDGWLFSIK (83 aa). N6-lipoyllysine is present on lysine 65.

It belongs to the GcvH family. In terms of assembly, the glycine cleavage system is composed of four proteins: P, T, L and H. (R)-lipoate is required as a cofactor.

The glycine cleavage system catalyzes the degradation of glycine. The H protein shuttles the methylamine group of glycine from the P protein to the T protein. The protein is Glycine cleavage system H protein of Yersinia pseudotuberculosis serotype O:1b (strain IP 31758).